A 75-amino-acid chain; its full sequence is UPF0235 protein MSMEG_3845 (75 aa).

Belongs to the UPF0235 family.

The protein is UPF0235 protein MSMEG_3845 of Mycolicibacterium smegmatis (strain ATCC 700084 / mc(2)155) (Mycobacterium smegmatis).